A 346-amino-acid chain; its full sequence is Heterogeneous nuclear ribonucleoprotein A1 (346 aa).

RRM domains follow at residues 23–123 (RKIF…GVRE) and 114–191 (KRLY…KGLS). Basic and acidic residues-rich tracts occupy residues 92–107 (TVDPKRAVPRDDKNRS) and 189–215 (GLSKDEMSKAQMNRDRETRGGRSRDGQ). 2 disordered regions span residues 92–111 (TVDPKRAVPRDDKNRSESNV) and 189–346 (GLSK…NRNY). Gly residues-rich tracts occupy residues 216–296 (RGGY…GWGG) and 303–331 (GGWGGPQQGGGGGGWGGQGQQQGGWGGQS). Residues 332–346 (GAQQWAHAQGGNRNY) are compositionally biased toward low complexity.

The protein localises to the nucleus. It is found in the chromosome. It localises to the telomere. In terms of biological role, this protein is a component of ribonucleosomes. Overexpression gradually increases telomere length, leading to increase lifespan. This chain is Heterogeneous nuclear ribonucleoprotein A1, found in Caenorhabditis elegans.